The chain runs to 286 residues: Probable 4-deoxy-4-formamido-L-arabinose-phosphoundecaprenol deformylase ArnD (286 aa).

Residues 1 to 248 (MGTKLGVPNL…IAINEGINFC (248 aa)) enclose the NodB homology domain.

Belongs to the polysaccharide deacetylase family. ArnD deformylase subfamily.

It carries out the reaction 4-deoxy-4-formamido-alpha-L-arabinopyranosyl di-trans,octa-cis-undecaprenyl phosphate + H2O = 4-amino-4-deoxy-alpha-L-arabinopyranosyl di-trans,octa-cis-undecaprenyl phosphate + formate. Its pathway is glycolipid biosynthesis; 4-amino-4-deoxy-alpha-L-arabinose undecaprenyl phosphate biosynthesis; 4-amino-4-deoxy-alpha-L-arabinose undecaprenyl phosphate from UDP-4-deoxy-4-formamido-beta-L-arabinose and undecaprenyl phosphate: step 2/2. The protein operates within bacterial outer membrane biogenesis; lipopolysaccharide biosynthesis. Catalyzes the deformylation of 4-deoxy-4-formamido-L-arabinose-phosphoundecaprenol to 4-amino-4-deoxy-L-arabinose-phosphoundecaprenol. The modified arabinose is attached to lipid A and is required for resistance to polymyxin and cationic antimicrobial peptides. This Wigglesworthia glossinidia brevipalpis protein is Probable 4-deoxy-4-formamido-L-arabinose-phosphoundecaprenol deformylase ArnD.